The sequence spans 346 residues: D-erythrose-4-phosphate dehydrogenase (346 aa).

NAD(+) is bound at residue 11-12; it reads RI. Residues 163-165, arginine 209, 222-223, and arginine 245 contribute to the substrate site; these read SCT and TK. Cysteine 164 functions as the Nucleophile in the catalytic mechanism. Position 327 (asparagine 327) interacts with NAD(+).

This sequence belongs to the glyceraldehyde-3-phosphate dehydrogenase family. Epd subfamily. In terms of assembly, homotetramer.

It is found in the cytoplasm. The catalysed reaction is D-erythrose 4-phosphate + NAD(+) + H2O = 4-phospho-D-erythronate + NADH + 2 H(+). It participates in cofactor biosynthesis; pyridoxine 5'-phosphate biosynthesis; pyridoxine 5'-phosphate from D-erythrose 4-phosphate: step 1/5. Functionally, catalyzes the NAD-dependent conversion of D-erythrose 4-phosphate to 4-phosphoerythronate. The protein is D-erythrose-4-phosphate dehydrogenase of Vibrio vulnificus (strain CMCP6).